The primary structure comprises 337 residues: Metacaspase III c (337 aa).

Propeptides lie at residues methionine 1 to arginine 6 and valine 116 to arginine 125. Cysteine sulfenic acid (-SOH) is present on cysteine 202. Cysteine 202 and cysteine 259 are disulfide-bonded. The active site involves histidine 207. 3 residues coordinate Ca(2+): aspartate 224, aspartate 240, and aspartate 241. Residue cysteine 264 is part of the active site. Aspartate 271 serves as a coordination point for Ca(2+). A propeptide spanning residues asparagine 290–glycine 337 is cleaved from the precursor.

Belongs to the peptidase C14B family. Post-translationally, auto-proteolytic cleavage into a large and a small subunit which probably remain associated by non-covalent bonds. In terms of processing, following oxidative stress, the oxidation of Cys-202 leads to the formation of a disulfide bond between Cys-202 and Cys-259 which enhances catalytic activity.

Activated by Ca(2+). Functionally, cysteine protease that cleaves specifically after arginine residues. This Phaeodactylum tricornutum (strain CCAP 1055/1) protein is Metacaspase III c.